We begin with the raw amino-acid sequence, 300 residues long: Small ribosomal subunit protein uS2 (300 aa).

The tract at residues Gly-278–Trp-300 is disordered.

Belongs to the universal ribosomal protein uS2 family. In terms of assembly, component of the small ribosomal subunit. Mature ribosomes consist of a small (40S) and a large (60S) subunit. The 40S subunit contains about 33 different proteins and 1 molecule of RNA (18S). The 60S subunit contains about 49 different proteins and 3 molecules of RNA (25S, 5.8S and 5S). Interacts with rps21.

The protein localises to the cytoplasm. Functionally, required for the assembly and/or stability of the 40S ribosomal subunit. Required for the processing of the 20S rRNA-precursor to mature 18S rRNA in a late step of the maturation of 40S ribosomal subunits. The polypeptide is Small ribosomal subunit protein uS2 (rps0) (Pyrenophora tritici-repentis (strain Pt-1C-BFP) (Wheat tan spot fungus)).